A 342-amino-acid chain; its full sequence is Ion-translocating oxidoreductase complex subunit D (342 aa).

A run of 3 helical transmembrane segments spans residues 42-62, 68-90, and 124-144; these read GSVI…ALFL, NIAF…LALP, and AMVG…QWLA. T171 carries the post-translational modification FMN phosphoryl threonine. Transmembrane regions (helical) follow at residues 200–220, 227–247, 252–272, 286–306, and 308–328; these read FAGL…LYLI, WHIP…AWLI, FADP…FFIA, LVYA…GGYP, and AVAF…YYTQ.

It belongs to the NqrB/RnfD family. In terms of assembly, the complex is composed of six subunits: RnfA, RnfB, RnfC, RnfD, RnfE and RnfG. It depends on FMN as a cofactor.

The protein localises to the cell inner membrane. Functionally, part of a membrane-bound complex that couples electron transfer with translocation of ions across the membrane. The protein is Ion-translocating oxidoreductase complex subunit D of Alcanivorax borkumensis (strain ATCC 700651 / DSM 11573 / NCIMB 13689 / SK2).